Here is a 447-residue protein sequence, read N- to C-terminus: Acyl-lipid (7-3)-desaturase (447 aa).

Positions Leu36–Ala94 constitute a Cytochrome b5 heme-binding domain. Positions 53 and 76 each coordinate heme. 3 helical membrane passes run Gly123–Leu143, Leu154–Asp174, and Ser185–Leu205. The short motif at His173 to His177 is the Histidine box-1 element. Residues His208–His213 carry the Histidine box-2 motif. A run of 3 helical transmembrane segments spans residues Trp244–Leu264, Leu286–Leu306, and Ala315–Ile335. The short motif at Gln386–His390 is the Histidine box-3 element.

Belongs to the fatty acid desaturase type 1 family. The cofactor is Fe(2+).

The protein resides in the membrane. It catalyses the reaction a (7Z,10Z,13Z,16Z,19Z)-docosapentaenoyl-containing glycerolipid + 2 Fe(II)-[cytochrome b5] + O2 + 2 H(+) = a (4Z,7Z,10Z,13Z,16Z,19Z)-docosahexaenoyl-containing glycerolipid + 2 Fe(III)-[cytochrome b5] + 2 H2O. It carries out the reaction a (7Z,10Z,13Z,16Z)-docosatetraenoyl-containing glycerolipid + 2 Fe(II)-[cytochrome b5] + O2 + 2 H(+) = a (4Z,7Z,10Z,13Z,16Z)-docosapentaenoyl-containing glycerolipid + 2 Fe(III)-[cytochrome b5] + 2 H2O. Its function is as follows. Fatty acid desaturase that introduces a cis double bond at the 4-position in 22-carbon polyunsaturated fatty acids that contain a Delta(7) double bond, resulting in the production of delta-4 desaturated fatty acid docosahexanoic acid (DHA). The protein is Acyl-lipid (7-3)-desaturase of Rebecca salina (Marine microalga).